Reading from the N-terminus, the 281-residue chain is N-methyltransferase tcpN (281 aa).

It belongs to the methyltransferase superfamily. LaeA methyltransferase family.

It functions in the pathway secondary metabolite biosynthesis. Functionally, N-methyltransferase; part of the gene cluster that mediates the biosynthesis of an unusual class of epipolythiodioxopiperazines (ETPs) lacking the reactive thiol group important for toxicity. Firstly, L-tyrosine is prenylated by tcpD, before undergoing condensation with L-glycine in a reaction catalyzed by the NRPS tcpP leading to the diketopiperazine (DKP) backbone. Afterwards the alpha-carbon of tyrosine is oxidized by the cytochrome P450 tcpC to form a hydroxyl group. However, in contrast other ETP biosynthesis pathways studied so far, tcpC is not able to bishydroxylate the DKP at both alpha-carbon positions, but hydroxylates the alpha-carbon of the tyrosine part and the nitrogen of the glycine part. The next steps involve an alpha,beta-elimination reaction catalyzed by tcpI, a methylation by the methyltransferase tcpN the action of the four enzyme cascade tcpG/K/J/I. Due to a dysfunctional cytochrome P450 monooxygenase tcpC, the pathway leads to the biosynthesis of probable non-toxic metabolites lacking the reactive thiol group. The chain is N-methyltransferase tcpN from Claviceps purpurea (strain 20.1) (Ergot fungus).